A 340-amino-acid chain; its full sequence is RNA 3'-terminal phosphate cyclase (340 aa).

ATP contacts are provided by residues Gln102 and Phe284–Gln288. The Tele-AMP-histidine intermediate role is filled by His308.

The protein belongs to the RNA 3'-terminal cyclase family. Type 1 subfamily.

It localises to the cytoplasm. It carries out the reaction a 3'-end 3'-phospho-ribonucleotide-RNA + ATP = a 3'-end 2',3'-cyclophospho-ribonucleotide-RNA + AMP + diphosphate. Catalyzes the conversion of 3'-phosphate to a 2',3'-cyclic phosphodiester at the end of RNA. The mechanism of action of the enzyme occurs in 3 steps: (A) adenylation of the enzyme by ATP; (B) transfer of adenylate to an RNA-N3'P to produce RNA-N3'PP5'A; (C) and attack of the adjacent 2'-hydroxyl on the 3'-phosphorus in the diester linkage to produce the cyclic end product. The biological role of this enzyme is unknown but it is likely to function in some aspects of cellular RNA processing. This is RNA 3'-terminal phosphate cyclase from Thermococcus onnurineus (strain NA1).